The chain runs to 453 residues: Bifunctional protein GlmU (453 aa).

Residues 1–231 (MERTCLAVIL…EIEMTGCNTR (231 aa)) are pyrophosphorylase. UDP-N-acetyl-alpha-D-glucosamine-binding positions include 10–13 (LAAG), K24, Q77, 82–83 (GT), 105–107 (YGD), G143, E157, N172, and N229. Mg(2+) is bound at residue D107. N229 contributes to the Mg(2+) binding site. A linker region spans residues 232-252 (AELAVIERFWQERRRHQMMLS). The interval 253–453 (GVTMIAPETV…AIKAAKKAKA (201 aa)) is N-acetyltransferase. UDP-N-acetyl-alpha-D-glucosamine-binding residues include R318 and K336. H348 (proton acceptor) is an active-site residue. UDP-N-acetyl-alpha-D-glucosamine contacts are provided by Y351 and N362. Acetyl-CoA-binding positions include A365, 371-372 (NY), S390, S408, and R425.

It in the N-terminal section; belongs to the N-acetylglucosamine-1-phosphate uridyltransferase family. The protein in the C-terminal section; belongs to the transferase hexapeptide repeat family. As to quaternary structure, homotrimer. Requires Mg(2+) as cofactor.

It localises to the cytoplasm. The enzyme catalyses alpha-D-glucosamine 1-phosphate + acetyl-CoA = N-acetyl-alpha-D-glucosamine 1-phosphate + CoA + H(+). The catalysed reaction is N-acetyl-alpha-D-glucosamine 1-phosphate + UTP + H(+) = UDP-N-acetyl-alpha-D-glucosamine + diphosphate. The protein operates within nucleotide-sugar biosynthesis; UDP-N-acetyl-alpha-D-glucosamine biosynthesis; N-acetyl-alpha-D-glucosamine 1-phosphate from alpha-D-glucosamine 6-phosphate (route II): step 2/2. Its pathway is nucleotide-sugar biosynthesis; UDP-N-acetyl-alpha-D-glucosamine biosynthesis; UDP-N-acetyl-alpha-D-glucosamine from N-acetyl-alpha-D-glucosamine 1-phosphate: step 1/1. It functions in the pathway bacterial outer membrane biogenesis; LPS lipid A biosynthesis. Its function is as follows. Catalyzes the last two sequential reactions in the de novo biosynthetic pathway for UDP-N-acetylglucosamine (UDP-GlcNAc). The C-terminal domain catalyzes the transfer of acetyl group from acetyl coenzyme A to glucosamine-1-phosphate (GlcN-1-P) to produce N-acetylglucosamine-1-phosphate (GlcNAc-1-P), which is converted into UDP-GlcNAc by the transfer of uridine 5-monophosphate (from uridine 5-triphosphate), a reaction catalyzed by the N-terminal domain. This is Bifunctional protein GlmU from Rhizobium johnstonii (strain DSM 114642 / LMG 32736 / 3841) (Rhizobium leguminosarum bv. viciae).